The chain runs to 415 residues: L-cysteine:1D-myo-inositol 2-amino-2-deoxy-alpha-D-glucopyranoside ligase (415 aa).

The disordered stretch occupies residues 1-20 (MQSWSETAVPSVPGQGPPLR). C43 lines the Zn(2+) pocket. Residues 43–46 (CGIT), T58, and 81–83 (NVT) contribute to the L-cysteinyl-5'-AMP site. The short motif at 45 to 55 (ITPYDATHLGH) is the 'HIGH' region element. The 'ERGGDP' region signature appears at 187–192 (ERGGDP). W227 provides a ligand contact to L-cysteinyl-5'-AMP. Zn(2+) is bound at residue C231. 249–251 (GSD) is an L-cysteinyl-5'-AMP binding site. H256 contributes to the Zn(2+) binding site. I283 is an L-cysteinyl-5'-AMP binding site. Residues 289 to 293 (KMSKS) carry the 'KMSKS' region motif.

The protein belongs to the class-I aminoacyl-tRNA synthetase family. MshC subfamily. As to quaternary structure, monomer. Zn(2+) is required as a cofactor.

It catalyses the reaction 1D-myo-inositol 2-amino-2-deoxy-alpha-D-glucopyranoside + L-cysteine + ATP = 1D-myo-inositol 2-(L-cysteinylamino)-2-deoxy-alpha-D-glucopyranoside + AMP + diphosphate + H(+). Catalyzes the ATP-dependent condensation of GlcN-Ins and L-cysteine to form L-Cys-GlcN-Ins. The chain is L-cysteine:1D-myo-inositol 2-amino-2-deoxy-alpha-D-glucopyranoside ligase from Rhodococcus jostii (strain RHA1).